The following is a 597-amino-acid chain: Chaperonin 60 subunit beta 3, chloroplastic (597 aa).

Residues 1-20 form a disordered region; it reads MASTFSATSSMGSSLAPPSN. A chloroplast-targeting transit peptide spans 1-29; sequence MASTFSATSSMGSSLAPPSNRLSSFVSIS. 2 positions are modified to phosphoserine: serine 97 and serine 474. A coiled-coil region spans residues 387-489; that stretch reads STEEVVKKRV…KETLANDEEK (103 aa).

The protein belongs to the chaperonin (HSP60) family. In terms of assembly, part of the Cpn60 complex composed of 7 alpha and 7 beta subunits. Can also form a complex composed of 14 beta subunits only. Both complexes show ATPase activity. The Cpn60 complex interacts with the Cpn10 complex.

It localises to the plastid. The protein resides in the chloroplast. Functionally, involved in protein assisted folding. The polypeptide is Chaperonin 60 subunit beta 3, chloroplastic (CPN60B3) (Arabidopsis thaliana (Mouse-ear cress)).